Consider the following 21-residue polypeptide: Cupiennin-6a (21 aa).

S21 is subject to Serine amide.

Expressed by the venom gland.

The protein localises to the secreted. The sequence is that of Cupiennin-6a from Cupiennius salei (American wandering spider).